We begin with the raw amino-acid sequence, 368 residues long: Peptide chain release factor 2 (368 aa).

The residue at position 250 (Gln-250) is an N5-methylglutamine.

Belongs to the prokaryotic/mitochondrial release factor family. Post-translationally, methylated by PrmC. Methylation increases the termination efficiency of RF2.

The protein resides in the cytoplasm. Its function is as follows. Peptide chain release factor 2 directs the termination of translation in response to the peptide chain termination codons UGA and UAA. This Chlamydia trachomatis serovar L2b (strain UCH-1/proctitis) protein is Peptide chain release factor 2.